The chain runs to 120 residues: Small ribosomal subunit protein uS11 (120 aa).

This sequence belongs to the universal ribosomal protein uS11 family. As to quaternary structure, part of the 30S ribosomal subunit. Interacts with proteins S7 and S18. Binds to IF-3.

In terms of biological role, located on the platform of the 30S subunit, it bridges several disparate RNA helices of the 16S rRNA. Forms part of the Shine-Dalgarno cleft in the 70S ribosome. The sequence is that of Small ribosomal subunit protein uS11 from Neorickettsia sennetsu (strain ATCC VR-367 / Miyayama) (Ehrlichia sennetsu).